The chain runs to 550 residues: Thioredoxin domain-containing protein 2 (550 aa).

Residues 1–50 are disordered; that stretch reads MFKKNQKLSKDKGLEVNSVQAGAPEESDVKLNNGGKANERGSNEFLDTAQ. A phosphoserine mark is found at serine 42 and serine 51. Positions 63–428 are disordered; the sequence is MLHMSTEESE…IKSSEDVQPS (366 aa). Polar residues-rich tracts occupy residues 73–87, 96–105, and 112–140; these read PPQQ…SENT, PKSSTKNTQL, and KTSS…QGST. 22 tandem repeats follow at residues 104–118, 119–133, 134–148, 149–163, 164–178, 179–193, 194–208, 209–223, 224–238, 239–252, 253–267, 268–282, 283–297, 298–312, 313–327, 328–342, 343–357, 358–384, 385–399, 400–412, 413–425, and 426–440. Positions 104 to 440 are 22 X 15 AA approximate tandem repeat of Q-P-K-X-G-D-I-P-K-S-[PS]-E-[KE]-X-I; sequence QLKQEDISKT…EIFPFEAEIE (337 aa). Composition is skewed to basic and acidic residues over residues 148-205, 217-259, 277-304, and 313-348; these read THDR…KSLE, KSSE…ESET, QVKD…ENKI, and QPKE…KEEI. Residue serine 158 is modified to Phosphoserine. Serine 351 and serine 379 each carry phosphoserine. In terms of domain architecture, Thioredoxin spans 401 to 550; sequence KEEITVSPED…KLEKSIAELK (150 aa). Phosphoserine is present on serine 407. Residues cysteine 477 and cysteine 480 are joined by a disulfide bond.

As to expression, testis-specific. Strongly expressed in the testicular seminiferous tubules, mostly in the round spermatids.

The protein localises to the cytoplasm. Functionally, probably plays a regulatory role in sperm development. May participate in regulation of fibrous sheath (FS) assembly by supporting the formation of disulfide bonds during sperm tail morphogenesis. May also be required to rectify incorrect disulfide pairing and generate suitable pairs between the FS constituents. Can reduce disulfide bonds in vitro in the presence of NADP and thioredoxin reductase. In Rattus norvegicus (Rat), this protein is Thioredoxin domain-containing protein 2 (Txndc2).